The sequence spans 193 residues: Putative RING finger protein ORF38 (193 aa).

The RING-type zinc finger occupies 12–50; the sequence is CCICLDDEDVDRDNTIPCRHTVCRTCYVKPMLDQCPVCR.

In Magallana gigas (Pacific oyster), this protein is Putative RING finger protein ORF38.